The following is a 304-amino-acid chain: D-alanine--D-alanine ligase (304 aa).

In terms of domain architecture, ATP-grasp spans 103 to 299 (KLIWQALGLP…FADLCIEILK (197 aa)). 129–184 (EEKLGLPMFVKPAAEGSSVGVVKVKGKGRLKSVYEELKHLQGEIIAERFIGGGEYS) contacts ATP. The Mg(2+) site is built by Asp-253, Glu-266, and Asn-268.

Belongs to the D-alanine--D-alanine ligase family. Requires Mg(2+) as cofactor. It depends on Mn(2+) as a cofactor.

The protein resides in the cytoplasm. It catalyses the reaction 2 D-alanine + ATP = D-alanyl-D-alanine + ADP + phosphate + H(+). Its pathway is cell wall biogenesis; peptidoglycan biosynthesis. Functionally, cell wall formation. The chain is D-alanine--D-alanine ligase from Neisseria meningitidis serogroup B (strain ATCC BAA-335 / MC58).